The primary structure comprises 1289 residues: Outer capsid protein lambda-2 (1289 aa).

893 to 900 (GAAAAGKS) lines the ATP pocket.

The protein belongs to the orthoreovirus lambda-2 protein family. As to quaternary structure, interacts with protein mu-NS; in viral inclusions.

It is found in the virion. It catalyses the reaction a 5'-end diphospho-ribonucleoside in mRNA + GTP + H(+) = a 5'-end (5'-triphosphoguanosine)-ribonucleoside in mRNA + diphosphate. The catalysed reaction is a 5'-end (5'-triphosphoguanosine)-ribonucleoside in mRNA + S-adenosyl-L-methionine = a 5'-end (N(7)-methyl 5'-triphosphoguanosine)-ribonucleoside in mRNA + S-adenosyl-L-homocysteine. Outer capsid protein involved in mRNA capping. Catalyzes the last 3 enzymatic activities for formation of the 5' cap structure on the viral plus-strand transcripts, namely the RNA guanylyltransferase, RNA-7N- and RNA-2'O-methyltransferase activities. The polypeptide is Outer capsid protein lambda-2 (L2) (Reovirus type 1 (strain Lang) (T1L)).